Reading from the N-terminus, the 303-residue chain is Ribonucleoside-diphosphate reductase small subunit (303 aa).

Fe cation contacts are provided by Asp60, Glu90, and His93. Tyr97 is an active-site residue. The helical transmembrane segment at 147–167 (LLMILIEGIFFASSFASISYL) threads the bilayer. Positions 153, 187, and 190 each coordinate Fe cation.

It belongs to the ribonucleoside diphosphate reductase small chain family. In terms of assembly, heterotetramer composed of a homodimer of the large subunit (R1) and a homodimer of the small subunit (R2). Larger multisubunit protein complex are also active, composed of (R1)n(R2)n. Requires Fe cation as cofactor.

The protein resides in the host membrane. It carries out the reaction a 2'-deoxyribonucleoside 5'-diphosphate + [thioredoxin]-disulfide + H2O = a ribonucleoside 5'-diphosphate + [thioredoxin]-dithiol. In terms of biological role, ribonucleoside-diphosphate reductase holoenzyme provides the precursors necessary for viral DNA synthesis. Allows virus growth in non-dividing cells, as well as reactivation from latency in infected hosts. Catalyzes the biosynthesis of deoxyribonucleotides from the corresponding ribonucleotides. The protein is Ribonucleoside-diphosphate reductase small subunit of Suid herpesvirus 1 (strain Kaplan) (SuHV-1).